A 670-amino-acid polypeptide reads, in one-letter code: NADH-ubiquinone oxidoreductase chain 5 (670 aa).

A run of 19 helical transmembrane segments spans residues 1–21, 31–51, 81–101, 111–131, 133–153, 178–198, 211–231, 251–271, 283–303, 311–331, 339–359, 375–395, 421–441, 462–482, 519–539, 566–586, 594–614, 629–649, and 650–670; these read MYIV…IFGH, IAVG…YEIL, LTSI…LYSM, TRFF…VTAD, FVQL…LINF, LFFG…SVIF, LLGY…IGVV, TPVS…FLVL, ILNI…TIGI, VIAY…GLLN, LTTH…VIHG, LMPL…GFPF, AIIG…LLIL, TNMV…GYVT, LLPL…YFNI, FDFL…YDVM, LWEK…FTAL, IVQT…TGFI, and YMEL…IKID.

The protein belongs to the complex I subunit 5 family.

It localises to the mitochondrion inner membrane. It catalyses the reaction a ubiquinone + NADH + 5 H(+)(in) = a ubiquinol + NAD(+) + 4 H(+)(out). Core subunit of the mitochondrial membrane respiratory chain NADH dehydrogenase (Complex I) that is believed to belong to the minimal assembly required for catalysis. Complex I functions in the transfer of electrons from NADH to the respiratory chain. The immediate electron acceptor for the enzyme is believed to be ubiquinone. This Dictyostelium discoideum (Social amoeba) protein is NADH-ubiquinone oxidoreductase chain 5 (nad5).